Reading from the N-terminus, the 170-residue chain is uncharacterized protein (170 aa).

The VOC domain maps to 25 to 151; it reads PALSPHLVVD…FGHHWSLGQP (127 aa).

This is an uncharacterized protein from Mycobacterium tuberculosis (strain CDC 1551 / Oshkosh).